The chain runs to 407 residues: Argininosuccinate synthase (407 aa).

Residues 11–19 and Ala-39 each bind ATP; that span reads AYSGGLDTS. 2 residues coordinate L-citrulline: Tyr-90 and Ser-95. Gly-120 contributes to the ATP binding site. L-aspartate-binding residues include Thr-122, Asn-126, and Asp-127. Position 126 (Asn-126) interacts with L-citrulline. L-citrulline is bound by residues Arg-130, Ser-179, Ser-188, Glu-264, and Tyr-276.

The protein belongs to the argininosuccinate synthase family. Type 1 subfamily. In terms of assembly, homotetramer.

The protein localises to the cytoplasm. The enzyme catalyses L-citrulline + L-aspartate + ATP = 2-(N(omega)-L-arginino)succinate + AMP + diphosphate + H(+). Its pathway is amino-acid biosynthesis; L-arginine biosynthesis; L-arginine from L-ornithine and carbamoyl phosphate: step 2/3. This Roseiflexus sp. (strain RS-1) protein is Argininosuccinate synthase.